A 451-amino-acid polypeptide reads, in one-letter code: Lipase member H (451 aa).

A signal peptide spans 1-16; sequence MLRLCFLLSFMCLVKS. N-linked (GlcNAc...) asparagine glycosylation occurs at asparagine 66. Serine 154 functions as the Nucleophile in the catalytic mechanism. Aspartate 178 (charge relay system) is an active-site residue. Cysteine 233 and cysteine 246 are oxidised to a cystine. The active-site Charge relay system is the histidine 248. 3 cysteine pairs are disulfide-bonded: cysteine 270–cysteine 281, cysteine 284–cysteine 292, and cysteine 427–cysteine 446.

The protein belongs to the AB hydrolase superfamily. Lipase family. In terms of assembly, interacts with TTMP/C3orf52.

The protein resides in the secreted. It localises to the cell membrane. It carries out the reaction 1-hexadecanoyl-2-(9Z-octadecenoyl)-sn-glycero-3-phosphate + H2O = 2-(9Z-octadecenoyl)-sn-glycero-3-phosphate + hexadecanoate + H(+). Hydrolyzes specifically phosphatidic acid (PA) to produce 2-acyl lysophosphatidic acid (LPA; a potent bioactive lipid mediator) and fatty acid. Does not hydrolyze other phospholipids, like phosphatidylserine (PS), phosphatidylcholine (PC) and phosphatidylethanolamine (PE) or triacylglycerol (TG). In Rattus norvegicus (Rat), this protein is Lipase member H (Liph).